The following is a 125-amino-acid chain: Small ribosomal subunit protein uS13 (125 aa).

Residues 97–125 (PLRGQRTKTNARTRKGKRKTVANKKMASK) are disordered.

It belongs to the universal ribosomal protein uS13 family. Part of the 30S ribosomal subunit. Forms a loose heterodimer with protein S19. Forms two bridges to the 50S subunit in the 70S ribosome.

Functionally, located at the top of the head of the 30S subunit, it contacts several helices of the 16S rRNA. In the 70S ribosome it contacts the 23S rRNA (bridge B1a) and protein L5 of the 50S subunit (bridge B1b), connecting the 2 subunits; these bridges are implicated in subunit movement. Contacts the tRNAs in the A and P-sites. In Borrelia hermsii (strain HS1 / DAH), this protein is Small ribosomal subunit protein uS13.